The following is an 81-amino-acid chain: MTDLFSSPDHTLDALGLRCPEPVMMVRKTVRNMQPGETLLIIADDPATTRDIPGFCTFMEHELVAKETDGLPYRYLIRKSG.

The Cysteine persulfide intermediate role is filled by Cys-19.

It belongs to the sulfur carrier protein TusA family. As to quaternary structure, interacts with IscS.

It is found in the cytoplasm. The protein operates within tRNA modification. Functionally, sulfur carrier protein involved in sulfur trafficking in the cell. Part of a sulfur-relay system required for 2-thiolation during synthesis of 2-thiouridine of the modified wobble base 5-methylaminomethyl-2-thiouridine (mnm(5)s(2)U) in tRNA. Interacts with IscS and stimulates its cysteine desulfurase activity. Accepts an activated sulfur from IscS, which is then transferred to TusD, and thus determines the direction of sulfur flow from IscS to 2-thiouridine formation. Also appears to be involved in sulfur transfer for the biosynthesis of molybdopterin. In Escherichia coli (strain SMS-3-5 / SECEC), this protein is Sulfur carrier protein TusA.